The sequence spans 194 residues: FMN-dependent NADH:quinone oxidoreductase (194 aa).

FMN contacts are provided by residues Ser9, 15 to 17 (SIS), and 85 to 88 (MYNF).

This sequence belongs to the azoreductase type 1 family. Homodimer. FMN serves as cofactor.

It carries out the reaction 2 a quinone + NADH + H(+) = 2 a 1,4-benzosemiquinone + NAD(+). The catalysed reaction is N,N-dimethyl-1,4-phenylenediamine + anthranilate + 2 NAD(+) = 2-(4-dimethylaminophenyl)diazenylbenzoate + 2 NADH + 2 H(+). Functionally, quinone reductase that provides resistance to thiol-specific stress caused by electrophilic quinones. Its function is as follows. Also exhibits azoreductase activity. Catalyzes the reductive cleavage of the azo bond in aromatic azo compounds to the corresponding amines. The protein is FMN-dependent NADH:quinone oxidoreductase of Xanthomonas oryzae pv. oryzae (strain MAFF 311018).